We begin with the raw amino-acid sequence, 109 residues long: Small ribosomal subunit protein bS16 (109 aa).

The interval 87–109 is disordered; it reads ALRETPKKSAPKAKAQERAKAAG. The span at 100-109 shows a compositional bias: basic and acidic residues; that stretch reads KAQERAKAAG.

The protein belongs to the bacterial ribosomal protein bS16 family.

This is Small ribosomal subunit protein bS16 from Rhodospirillum centenum (strain ATCC 51521 / SW).